Consider the following 448-residue polypeptide: RuvB-like 2 (448 aa).

73-80 (GEPGAGKT) serves as a coordination point for ATP.

The protein belongs to the RuvB family. As to quaternary structure, forms homohexameric rings. May form a dodecamer with ruvb-1 made of two stacked hexameric rings. As to expression, expressed in gonadal cells.

The protein resides in the cytoplasm. Its subcellular location is the nucleus. It carries out the reaction ATP + H2O = ADP + phosphate + H(+). Possesses single-stranded DNA-stimulated ATPase and ATP-dependent DNA helicase (5' to 3') activity suggesting a role in nuclear processes such as recombination and transcription. May participate in several chromatin remodeling complexes that mediate the ATP-dependent exchange of histones and remodel chromatin by shifting nucleosomes. Involvement in these complexes is likely required for transcriptional activation of selected genes and DNA repair in response to DNA damage. Has a role in gonadal development. Involved in the endoplasmic reticulum (ER)-associated degradation (ERAD) pathway where it negatively regulates expression of ER stress response genes. Specifically, negatively controls the expression of ER homeostasis regulator ckb-2 in a cdc-48.1/2-dependent manner. In Caenorhabditis elegans, this protein is RuvB-like 2.